The sequence spans 559 residues: Excitatory amino acid transporter 5 (559 aa).

Topologically, residues 1–16 are cytoplasmic; the sequence is MVLDAVLARGRTVCKH. Helical transmembrane passes span 17–37, 60–80, and 94–114; these read NGLL…GFFL, MLKM…LASL, and AYYL…VSII. Topologically, residues 115–215 are extracellular; it reads HPGGAAQKET…EIVYKSEPGT (101 aa). Asn190 carries an N-linked (GlcNAc...) asparagine glycan. Residues 216-236 traverse the membrane as a helical segment; that stretch reads SDGMNVLGIVIFSATMGIMLG. Asn253 is a glycosylation site (N-linked (GlcNAc...) asparagine). The next 6 membrane-spanning stretches (helical) occupy residues 259–279, 298–318, 329–349, 371–391, 413–433, and 456–476; these read IVAV…AGKI, TVVC…YFLI, GVLQ…TLPI, VGAT…AIFI, AASI…VIVL, and FRTM…AHIC.

This sequence belongs to the dicarboxylate/amino acid:cation symporter (DAACS) (TC 2.A.23) family. SLC1A7 subfamily. As to quaternary structure, interacts with the PDZ domains of DLG4. In terms of tissue distribution, expressed in retina, located in both cone and rod photoreceptor terminals and in axon terminals of rod bipolar cells.

It is found in the photoreceptor inner segment membrane. The protein resides in the synaptic cell membrane. It catalyses the reaction K(+)(in) + L-glutamate(out) + 3 Na(+)(out) + H(+)(out) = K(+)(out) + L-glutamate(in) + 3 Na(+)(in) + H(+)(in). The enzyme catalyses K(+)(in) + L-aspartate(out) + 3 Na(+)(out) + H(+)(out) = K(+)(out) + L-aspartate(in) + 3 Na(+)(in) + H(+)(in). It carries out the reaction D-aspartate(out) + K(+)(in) + 3 Na(+)(out) + H(+)(out) = D-aspartate(in) + K(+)(out) + 3 Na(+)(in) + H(+)(in). Sodium-dependent, high-affinity amino acid transporter that mediates the uptake of L-glutamate and also L-aspartate and D-aspartate. Functions as a symporter that transports one amino acid molecule together with two or three Na(+) ions and one proton, in parallel with the counter-transport of one K(+) ion. Acts primarily as an inhibitory glutamate-gated chloride channel being a major inhibitory presynaptic receptor at mammalian rod bipolar cell axon terminals. Glutamate binding gates a large Cl(-) conductance that mediates inhibition, affecting visual processing in the retina. The protein is Excitatory amino acid transporter 5 of Mus musculus (Mouse).